Here is a 95-residue protein sequence, read N- to C-terminus: Putative protein RDUR (95 aa).

The span at 1–12 (MNNSFNKEDRMS) shows a compositional bias: basic and acidic residues. Residues 1 to 20 (MNNSFNKEDRMSSDTMVGSC) are disordered.

Could play a role in innate immunity against viruses. This Homo sapiens (Human) protein is Putative protein RDUR.